The sequence spans 185 residues: Ribosome-recycling factor (185 aa).

This sequence belongs to the RRF family.

It localises to the cytoplasm. Responsible for the release of ribosomes from messenger RNA at the termination of protein biosynthesis. May increase the efficiency of translation by recycling ribosomes from one round of translation to another. The polypeptide is Ribosome-recycling factor (Haemophilus ducreyi (strain 35000HP / ATCC 700724)).